The chain runs to 62 residues: Large ribosomal subunit protein uL29 (62 aa).

It belongs to the universal ribosomal protein uL29 family.

In Desulfatibacillum aliphaticivorans, this protein is Large ribosomal subunit protein uL29.